We begin with the raw amino-acid sequence, 451 residues long: MHYQLRRRGTKMTELRGRLRAAGDRLRALPTHPGVGEARGFGEYLIQRIQQDQCAKSAGMLAYVTLLAIVPLMTIGFSVLAAFPVFEGVTDRLREAMVDYLVPAASDAIDEHLENFMGRAAELTAVGIAGLTVTALLLLNTIERVLNEIWRVERPRPTLQRFMVYWTVLTMGPLLLGVSVASTSYMGTVNLGPLEPPSDLIAQLLNLAPFVVQAIVFSLIYSLVPHRSVPVLHAVIGGVVASGLFELAKGGFAAFIARAPTYEVVYGALAALPIFLVWLYISWLVILIGAEVTQALRGYRWRTGGDLARNRWALVLAVHILGHLYQAQRRGAGVTFAELLEQEPDAGEPALAEALETLRRHHVIERSADGAWLLARDTSTFTLAELHRMLAYPLPPAAGLETGAPWDRRLAERLRRVEERWEQSFDLSLSDLLEPTAEEAGAGRSARAEVA.

A run of 6 helical transmembrane segments spans residues 66 to 86, 122 to 142, 162 to 182, 204 to 224, 228 to 248, and 268 to 288; these read LLAI…FPVF, ELTA…LNTI, FMVY…SVAS, LLNL…YSLV, SVPV…FELA, and ALAA…VILI.

Belongs to the UPF0761 family.

The protein resides in the cell inner membrane. The polypeptide is UPF0761 membrane protein Hhal_0704 (Halorhodospira halophila (strain DSM 244 / SL1) (Ectothiorhodospira halophila (strain DSM 244 / SL1))).